The chain runs to 303 residues: Oxygen-dependent coproporphyrinogen-III oxidase (303 aa).

A substrate-binding site is contributed by Ser93. A divalent metal cation-binding residues include His97 and His107. The active-site Proton donor is the His107. 109-111 contacts substrate; sequence NVR. Positions 146 and 176 each coordinate a divalent metal cation. The interval 241 to 276 is important for dimerization; it reads YVEFNLVYDRGTLFGLQSGGRTESILMSLPPQVRWG. 259 to 261 contacts substrate; sequence GGR.

This sequence belongs to the aerobic coproporphyrinogen-III oxidase family. As to quaternary structure, homodimer. A divalent metal cation is required as a cofactor.

The protein localises to the cytoplasm. The enzyme catalyses coproporphyrinogen III + O2 + 2 H(+) = protoporphyrinogen IX + 2 CO2 + 2 H2O. Its pathway is porphyrin-containing compound metabolism; protoporphyrin-IX biosynthesis; protoporphyrinogen-IX from coproporphyrinogen-III (O2 route): step 1/1. Its function is as follows. Involved in the heme biosynthesis. Catalyzes the aerobic oxidative decarboxylation of propionate groups of rings A and B of coproporphyrinogen-III to yield the vinyl groups in protoporphyrinogen-IX. This chain is Oxygen-dependent coproporphyrinogen-III oxidase, found in Pseudomonas putida (strain GB-1).